The sequence spans 112 residues: Putative membrane protein insertion efficiency factor (112 aa).

This sequence belongs to the UPF0161 family.

It localises to the cell inner membrane. Its function is as follows. Could be involved in insertion of integral membrane proteins into the membrane. In Bradyrhizobium diazoefficiens (strain JCM 10833 / BCRC 13528 / IAM 13628 / NBRC 14792 / USDA 110), this protein is Putative membrane protein insertion efficiency factor.